Reading from the N-terminus, the 63-residue chain is Large ribosomal subunit protein uL29 (63 aa).

This sequence belongs to the universal ribosomal protein uL29 family.

The protein is Large ribosomal subunit protein uL29 of Klebsiella pneumoniae (strain 342).